A 424-amino-acid chain; its full sequence is Serine--tRNA ligase (424 aa).

A disordered region spans residues 109–129; that stretch reads QEDVPYGESEEDNREERKWGD. L-serine is bound at residue 231 to 233; the sequence is TAE. 262–264 provides a ligand contact to ATP; the sequence is RSE. Glutamate 285 is a binding site for L-serine. 349 to 352 is an ATP binding site; the sequence is EISS. L-serine is bound at residue serine 385.

This sequence belongs to the class-II aminoacyl-tRNA synthetase family. Type-1 seryl-tRNA synthetase subfamily. Homodimer. The tRNA molecule binds across the dimer.

Its subcellular location is the cytoplasm. It carries out the reaction tRNA(Ser) + L-serine + ATP = L-seryl-tRNA(Ser) + AMP + diphosphate + H(+). The catalysed reaction is tRNA(Sec) + L-serine + ATP = L-seryl-tRNA(Sec) + AMP + diphosphate + H(+). The protein operates within aminoacyl-tRNA biosynthesis; selenocysteinyl-tRNA(Sec) biosynthesis; L-seryl-tRNA(Sec) from L-serine and tRNA(Sec): step 1/1. Its function is as follows. Catalyzes the attachment of serine to tRNA(Ser). Is also able to aminoacylate tRNA(Sec) with serine, to form the misacylated tRNA L-seryl-tRNA(Sec), which will be further converted into selenocysteinyl-tRNA(Sec). This Shouchella clausii (strain KSM-K16) (Alkalihalobacillus clausii) protein is Serine--tRNA ligase.